We begin with the raw amino-acid sequence, 187 residues long: MSFPLHPSLVNGITKGNPSFQGGVLKCKCSTSPVTVTLRSNVAHNHACGCSKCWKPEGALFSIVSVVPVDKLEVTANGDKLAVVDPSATILRHACTGCGVHLYGRIEKDHAFKGLDFVHTELSDEKGWQEPQFAGFVTSIIEQGFDARHIDDVRAQFESLGLESYDALNPPLMNAIAAFTAANEAKA.

Residues 20–166 (FQGGVLKCKC…FESLGLESYD (147 aa)) enclose the CENP-V/GFA domain. Residues Cys-27, Cys-29, Cys-48, Cys-50, Cys-53, Cys-95, and Cys-98 each contribute to the Zn(2+) site.

The protein belongs to the Gfa family. The cofactor is Zn(2+).

The catalysed reaction is S-(hydroxymethyl)glutathione = glutathione + formaldehyde. The protein operates within one-carbon metabolism; formaldehyde degradation; formate from formaldehyde (glutathione route): step 1/3. In terms of biological role, catalyzes the condensation of formaldehyde and glutathione to S-hydroxymethylglutathione. The sequence is that of Putative glutathione-dependent formaldehyde-activating enzyme from Verticillium alfalfae (strain VaMs.102 / ATCC MYA-4576 / FGSC 10136) (Verticillium wilt of alfalfa).